The following is a 493-amino-acid chain: Glutamyl-tRNA(Gln) amidotransferase subunit A (493 aa).

Active-site charge relay system residues include lysine 79 and serine 159. Serine 183 serves as the catalytic Acyl-ester intermediate.

It belongs to the amidase family. GatA subfamily. Heterotrimer of A, B and C subunits.

It carries out the reaction L-glutamyl-tRNA(Gln) + L-glutamine + ATP + H2O = L-glutaminyl-tRNA(Gln) + L-glutamate + ADP + phosphate + H(+). Allows the formation of correctly charged Gln-tRNA(Gln) through the transamidation of misacylated Glu-tRNA(Gln) in organisms which lack glutaminyl-tRNA synthetase. The reaction takes place in the presence of glutamine and ATP through an activated gamma-phospho-Glu-tRNA(Gln). This is Glutamyl-tRNA(Gln) amidotransferase subunit A from Sinorhizobium fredii (strain NBRC 101917 / NGR234).